Reading from the N-terminus, the 100-residue chain is Putative membrane protein insertion efficiency factor (100 aa).

The tract at residues 73–100 (DPVPDLPGSAPEENGRPSPDGQHSGSGG) is disordered.

It belongs to the UPF0161 family.

It is found in the cell inner membrane. Its function is as follows. Could be involved in insertion of integral membrane proteins into the membrane. This Synechococcus sp. (strain JA-3-3Ab) (Cyanobacteria bacterium Yellowstone A-Prime) protein is Putative membrane protein insertion efficiency factor.